The chain runs to 277 residues: Large ribosomal subunit protein uL2c (277 aa).

Positions 228 to 254 (VDHPHGGGEGRCPVGHAQPRTPWGKPA) are disordered.

This sequence belongs to the universal ribosomal protein uL2 family. As to quaternary structure, part of the 50S ribosomal subunit.

It is found in the plastid. The protein localises to the chloroplast. In Ostreococcus tauri, this protein is Large ribosomal subunit protein uL2c (rpl2).